A 150-amino-acid polypeptide reads, in one-letter code: Cytochrome c oxidase subunit 5A, mitochondrial (150 aa).

The N-terminal 41 residues, 1 to 41, are a transit peptide targeting the mitochondrion; that stretch reads MLGAALRRCAVAATTWAGPRGLLHSARTPGPAAAIQSVRCY. An SIFI-degron motif is present at residues 2–17; the sequence is LGAALRRCAVAATTWA. K87 and K113 each carry N6-acetyllysine. Residue T141 is modified to Phosphothreonine.

This sequence belongs to the cytochrome c oxidase subunit 5A family. As to quaternary structure, component of the cytochrome c oxidase (complex IV, CIV), a multisubunit enzyme composed of 14 subunits. The complex is composed of a catalytic core of 3 subunits MT-CO1, MT-CO2 and MT-CO3, encoded in the mitochondrial DNA, and 11 supernumerary subunits COX4I, COX5A, COX5B, COX6A, COX6B, COX6C, COX7A, COX7B, COX7C, COX8 and NDUFA4, which are encoded in the nuclear genome. The complex exists as a monomer or a dimer and forms supercomplexes (SCs) in the inner mitochondrial membrane with NADH-ubiquinone oxidoreductase (complex I, CI) and ubiquinol-cytochrome c oxidoreductase (cytochrome b-c1 complex, complex III, CIII), resulting in different assemblies (supercomplex SCI(1)III(2)IV(1) and megacomplex MCI(2)III(2)IV(2)). Interacts with AFG1L. Interacts with RAB5IF. In terms of processing, in response to mitochondrial stress, the precursor protein is ubiquitinated by the SIFI complex in the cytoplasm before mitochondrial import, leading to its degradation. Within the SIFI complex, UBR4 initiates ubiquitin chain that are further elongated or branched by KCMF1.

It is found in the mitochondrion inner membrane. It functions in the pathway energy metabolism; oxidative phosphorylation. In terms of biological role, component of the cytochrome c oxidase, the last enzyme in the mitochondrial electron transport chain which drives oxidative phosphorylation. The respiratory chain contains 3 multisubunit complexes succinate dehydrogenase (complex II, CII), ubiquinol-cytochrome c oxidoreductase (cytochrome b-c1 complex, complex III, CIII) and cytochrome c oxidase (complex IV, CIV), that cooperate to transfer electrons derived from NADH and succinate to molecular oxygen, creating an electrochemical gradient over the inner membrane that drives transmembrane transport and the ATP synthase. Cytochrome c oxidase is the component of the respiratory chain that catalyzes the reduction of oxygen to water. Electrons originating from reduced cytochrome c in the intermembrane space (IMS) are transferred via the dinuclear copper A center (CU(A)) of subunit 2 and heme A of subunit 1 to the active site in subunit 1, a binuclear center (BNC) formed by heme A3 and copper B (CU(B)). The BNC reduces molecular oxygen to 2 water molecules using 4 electrons from cytochrome c in the IMS and 4 protons from the mitochondrial matrix. The polypeptide is Cytochrome c oxidase subunit 5A, mitochondrial (COX5A) (Papio anubis (Olive baboon)).